The chain runs to 335 residues: Biotin synthase (335 aa).

One can recognise a Radical SAM core domain in the interval 39–267 (TKIQVCKLIS…ASDVRLSAGR (229 aa)). The [4Fe-4S] cluster site is built by Cys-54, Cys-58, and Cys-61. [2Fe-2S] cluster-binding residues include Cys-98, Cys-130, Cys-190, and Arg-262.

It belongs to the radical SAM superfamily. Biotin synthase family. In terms of assembly, homodimer. [4Fe-4S] cluster serves as cofactor. [2Fe-2S] cluster is required as a cofactor.

The catalysed reaction is (4R,5S)-dethiobiotin + (sulfur carrier)-SH + 2 reduced [2Fe-2S]-[ferredoxin] + 2 S-adenosyl-L-methionine = (sulfur carrier)-H + biotin + 2 5'-deoxyadenosine + 2 L-methionine + 2 oxidized [2Fe-2S]-[ferredoxin]. Its pathway is cofactor biosynthesis; biotin biosynthesis; biotin from 7,8-diaminononanoate: step 2/2. Functionally, catalyzes the conversion of dethiobiotin (DTB) to biotin by the insertion of a sulfur atom into dethiobiotin via a radical-based mechanism. The polypeptide is Biotin synthase (Nostoc punctiforme (strain ATCC 29133 / PCC 73102)).